Reading from the N-terminus, the 235-residue chain is DNA repair protein RecO (235 aa).

This sequence belongs to the RecO family.

Functionally, involved in DNA repair and RecF pathway recombination. This is DNA repair protein RecO from Enterobacter sp. (strain 638).